The sequence spans 355 residues: UDP-N-acetylglucosamine--N-acetylmuramyl-(pentapeptide) pyrophosphoryl-undecaprenol N-acetylglucosamine transferase (355 aa).

Residues 15–17 (TGG), N127, R163, S191, I244, 263–268 (ALTVSE), and Q288 contribute to the UDP-N-acetyl-alpha-D-glucosamine site.

This sequence belongs to the glycosyltransferase 28 family. MurG subfamily.

It is found in the cell inner membrane. The catalysed reaction is di-trans,octa-cis-undecaprenyl diphospho-N-acetyl-alpha-D-muramoyl-L-alanyl-D-glutamyl-meso-2,6-diaminopimeloyl-D-alanyl-D-alanine + UDP-N-acetyl-alpha-D-glucosamine = di-trans,octa-cis-undecaprenyl diphospho-[N-acetyl-alpha-D-glucosaminyl-(1-&gt;4)]-N-acetyl-alpha-D-muramoyl-L-alanyl-D-glutamyl-meso-2,6-diaminopimeloyl-D-alanyl-D-alanine + UDP + H(+). It functions in the pathway cell wall biogenesis; peptidoglycan biosynthesis. Its function is as follows. Cell wall formation. Catalyzes the transfer of a GlcNAc subunit on undecaprenyl-pyrophosphoryl-MurNAc-pentapeptide (lipid intermediate I) to form undecaprenyl-pyrophosphoryl-MurNAc-(pentapeptide)GlcNAc (lipid intermediate II). This is UDP-N-acetylglucosamine--N-acetylmuramyl-(pentapeptide) pyrophosphoryl-undecaprenol N-acetylglucosamine transferase from Shigella boydii serotype 18 (strain CDC 3083-94 / BS512).